The following is a 155-amino-acid chain: Cytochrome c-type biogenesis protein CcmE (155 aa).

Residues 1-8 (MHPKRKQR) lie on the Cytoplasmic side of the membrane. A helical; Signal-anchor for type II membrane protein membrane pass occupies residues 9 to 29 (LILVLFVVLVSSVGVSLTLYA). The Periplasmic segment spans residues 30–155 (LNENINLFYP…KTCKGISYDS (126 aa)). His124 and Tyr128 together coordinate heme.

Belongs to the CcmE/CycJ family.

It localises to the cell inner membrane. Its function is as follows. Heme chaperone required for the biogenesis of c-type cytochromes. Transiently binds heme delivered by CcmC and transfers the heme to apo-cytochromes in a process facilitated by CcmF and CcmH. This is Cytochrome c-type biogenesis protein CcmE from Teredinibacter turnerae (strain ATCC 39867 / T7901).